A 122-amino-acid chain; its full sequence is Putative 2'-deoxynucleoside 5'-phosphate N-hydrolase 1 (122 aa).

Residues 4–10, Y19, H37, E83, and 105–107 contribute to the substrate site; these read FLSGSIR and SAM.

The protein belongs to the 2'-deoxynucleoside 5'-phosphate N-hydrolase 1 family. As to quaternary structure, monomer and homodimer.

The catalysed reaction is a pyrimidine 2'-deoxyribonucleoside 5'-phosphate + H2O = a pyrimidine nucleobase + 2-deoxy-D-ribose 5-phosphate. It catalyses the reaction a purine 2'-deoxyribonucleoside 5'-phosphate + H2O = a purine nucleobase + 2-deoxy-D-ribose 5-phosphate. Functionally, catalyzes the cleavage of the N-glycosidic bond of deoxyribonucleoside 5'-monophosphates to yield deoxyribose 5-phosphate and a purine or pyrimidine base. The chain is Putative 2'-deoxynucleoside 5'-phosphate N-hydrolase 1 from Methanococcoides burtonii (strain DSM 6242 / NBRC 107633 / OCM 468 / ACE-M).